Reading from the N-terminus, the 190-residue chain is Dense granule protein 1 (190 aa).

Residues 1 to 24 (MVRVSAIVGAAASVFVCLSAGAYA) form the signal peptide. Asn30 carries an N-linked (GlcNAc...) asparagine glycan.

Its subcellular location is the secreted. This chain is Dense granule protein 1 (GRA1), found in Toxoplasma gondii.